The chain runs to 98 residues: NADH-ubiquinone oxidoreductase chain 4L (98 aa).

A run of 3 helical transmembrane segments spans residues 1–21, 29–49, and 61–81; these read MSLTYMNMFMAFTISLLGLLM, SLLCLEGMMLSLFVMMTMVIL, and IILLVFAACEAALGLSLLVMV.

This sequence belongs to the complex I subunit 4L family. Core subunit of respiratory chain NADH dehydrogenase (Complex I) which is composed of 45 different subunits.

Its subcellular location is the mitochondrion inner membrane. It carries out the reaction a ubiquinone + NADH + 5 H(+)(in) = a ubiquinol + NAD(+) + 4 H(+)(out). Core subunit of the mitochondrial membrane respiratory chain NADH dehydrogenase (Complex I) which catalyzes electron transfer from NADH through the respiratory chain, using ubiquinone as an electron acceptor. Part of the enzyme membrane arm which is embedded in the lipid bilayer and involved in proton translocation. The protein is NADH-ubiquinone oxidoreductase chain 4L (MT-ND4L) of Vampyressa thyone (Northern little yellow-eared bat).